A 436-amino-acid chain; its full sequence is Prenyltransferase nscD (436 aa).

The protein belongs to the tryptophan dimethylallyltransferase family.

It functions in the pathway secondary metabolite biosynthesis. In terms of biological role, prenyltransferase; part of the gene cluster that mediates the biosynthesis of neosartoricin B, a prenylated anthracenone that probably exhibits T-cell antiproliferative activity, suggestive of a physiological role as an immunosuppressive agent. The non-reducing polyketide synthase nscA probably synthesizes and cyclizes the decaketide backbone. The hydrolase nscB then mediates the product release through hydrolysis followed by spontaneous decarboxylation. The prenyltransferase nscD catalyzes the addition of the dimethylallyl group to the aromatic C5. The FAD-dependent monooxygenase nscC is then responsible for the stereospecific hydroxylation at C2. Neosartoricin B can be converted into two additional compounds neosartoricins C and D. Neosartoricin C is a spirocyclic compound that is cyclized through the attack of C3 hydroxyl on C14, followed by dehydration. On the other hand, neosartoricin D is a further cyclized compound in which attack of C2 on C14 in neosartoricin C results in the formation of the acetal-containing dioxabicyclo-octanone ring. Both of these compounds are novel and possibly represent related metabolites of the gene cluster. The sequence is that of Prenyltransferase nscD from Arthroderma otae (strain ATCC MYA-4605 / CBS 113480) (Microsporum canis).